The sequence spans 185 residues: Signal peptidase I P (185 aa).

At 1–14 the chain is on the cytoplasmic side; sequence MFDKEKRKKSNIID. Residues 15–34 traverse the membrane as a helical segment; the sequence is WIKAILIALILVFLVRTFLF. Over 35–185 the chain is Extracellular; it reads EPYIVQGESM…FPLDRIRHAK (151 aa). Active-site residues include serine 43 and lysine 85.

It belongs to the peptidase S26 family.

The protein resides in the cell membrane. It catalyses the reaction Cleavage of hydrophobic, N-terminal signal or leader sequences from secreted and periplasmic proteins.. The polypeptide is Signal peptidase I P (sipP) (Bacillus subtilis subsp. natto).